The primary structure comprises 814 residues: Probable G-protein coupled receptor 156 (814 aa).

Over 1 to 47 the chain is Extracellular; the sequence is MEPEINCSELCDSFPGQELDRRPLHDLCKTTITSSHHSSKTISSLSP. N-linked (GlcNAc...) asparagine glycosylation is present at Asn6. A helical transmembrane segment spans residues 48 to 68; the sequence is VLLGIVWTFLSCGLLLILFFL. At 69 to 86 the chain is on the cytoplasmic side; the sequence is AFTIHCRKNRIVKMSSPN. The chain crosses the membrane as a helical span at residues 87–107; sequence LNIVTLLGSCLTYSSAYLFGI. Residues 108-118 are Extracellular-facing; it reads QDVLVGSSMET. A helical membrane pass occupies residues 119-139; the sequence is LIQTRLSMLCIGTSLVFGPIL. The Cytoplasmic segment spans residues 140–164; the sequence is GKSWRLYKVFTQRVPDKRVIIKDLQ. A helical transmembrane segment spans residues 165 to 185; the sequence is LLGLVAALLMADVILLMTWVL. Topologically, residues 186-222 are extracellular; that stretch reads TDPIQCLQILSVSMTVTGKDVSCTSTSTHFCASRYSD. A helical transmembrane segment spans residues 223-243; the sequence is VWIALIWGCKGLLLLYGAYLA. At 244–257 the chain is on the cytoplasmic side; it reads GLTGHVSSPPVNQS. A helical transmembrane segment spans residues 258-278; that stretch reads LTIMVGVNLLVLAAGLLFVVT. The Extracellular portion of the chain corresponds to 279–288; it reads RYLHSWPNLV. Residues 289 to 309 traverse the membrane as a helical segment; that stretch reads FGLTSGGIFVCTTTINCFIFI. Residues 310–814 lie on the Cytoplasmic side of the membrane; that stretch reads PQLKQWKAFE…FKDDLKPTLV (505 aa). A coiled-coil region spans residues 354–390; it reads EKSSMERLLTEKNAVIESLQEQVNNAKEKIVRLMSAE. 3 disordered regions span residues 422-545, 557-724, and 769-792; these read AQGP…SSVI, GLGP…PEQW, and SSSD…LASW. The span at 443–454 shows a compositional bias: polar residues; that stretch reads SQCTSGPSSYAQ. Residues 468-484 show a composition bias toward basic and acidic residues; it reads GKEEKISDSKDFSDHLD. Residues 486–496 show a composition bias toward polar residues; the sequence is GCSQKPWTEQS. Positions 523 to 545 are enriched in basic and acidic residues; that stretch reads QRQRHLENSEEPPERRSRVSSVI. The segment covering 563-581 has biased composition (polar residues); the sequence is SLSTAPSCHQQTWKNSAAF. Over residues 599 to 610 the composition is skewed to basic residues; that stretch reads VRRRRAAQRARS. A compositionally biased stretch (polar residues) spans 639–651; that stretch reads NGDSPSLAPQTTD. Positions 769–780 are enriched in low complexity; it reads SSSDSSDSGTSD.

This sequence belongs to the G-protein coupled receptor 3 family. GABA-B receptor subfamily. Ubiquitous expression both in the CNS and in peripheral tissues. Very high expression in fetal brain and testis relative to expression in other tissues.

It localises to the cell membrane. Functionally, orphan G-protein coupled receptor involved in the regulation of hair cell orientation in mechanosensory organs of the inner ear. It is required to trigger a 180 degree reversal in hair cell orientation, creating a virtual line of polarity reversal (LPR) across which stereociliary bundles are arranged in opposite orientations. The sequence is that of Probable G-protein coupled receptor 156 (GPR156) from Homo sapiens (Human).